Reading from the N-terminus, the 473-residue chain is Uronate isomerase (473 aa).

This sequence belongs to the metallo-dependent hydrolases superfamily. Uronate isomerase family.

The enzyme catalyses D-glucuronate = D-fructuronate. It carries out the reaction aldehydo-D-galacturonate = keto-D-tagaturonate. It functions in the pathway carbohydrate metabolism; pentose and glucuronate interconversion. The chain is Uronate isomerase (uxaC) from Geobacillus stearothermophilus (Bacillus stearothermophilus).